Here is a 178-residue protein sequence, read N- to C-terminus: Large ribosomal subunit protein uL6 (178 aa).

This sequence belongs to the universal ribosomal protein uL6 family. Part of the 50S ribosomal subunit.

Functionally, this protein binds to the 23S rRNA, and is important in its secondary structure. It is located near the subunit interface in the base of the L7/L12 stalk, and near the tRNA binding site of the peptidyltransferase center. The protein is Large ribosomal subunit protein uL6 of Staphylococcus epidermidis (strain ATCC 35984 / DSM 28319 / BCRC 17069 / CCUG 31568 / BM 3577 / RP62A).